The chain runs to 1196 residues: Major DNA-binding protein (1196 aa).

The segment at cysteine 499–histidine 512 is a zinc-finger region. Short sequence motifs (required for filament formation) lie at residues phenylalanine 843–tryptophan 844 and phenylalanine 1142–phenylalanine 1144. Positions glycine 1158–leucine 1196 are disordered. Residues arginine 1170–leucine 1196 form a required for nuclear localization region. Basic and acidic residues predominate over residues phenylalanine 1174–leucine 1196.

Belongs to the herpesviridae major DNA-binding protein family. Homooligomers. Forms double-helical filaments necessary for the formation of replication compartments within the host nucleus. Interacts with the origin-binding protein. Interacts with the helicase primase complex; this interaction stimulates primer synthesis activity of the helicase-primase complex. Interacts with the DNA polymerase. Interacts with the alkaline exonuclease; this interaction increases its nuclease processivity.

The protein localises to the host nucleus. Functionally, plays several crucial roles in viral infection. Participates in the opening of the viral DNA origin to initiate replication by interacting with the origin-binding protein. May disrupt loops, hairpins and other secondary structures present on ssDNA to reduce and eliminate pausing of viral DNA polymerase at specific sites during elongation. Promotes viral DNA recombination by performing strand-transfer, characterized by the ability to transfer a DNA strand from a linear duplex to a complementary single-stranded DNA circle. Can also catalyze the renaturation of complementary single strands. Additionally, reorganizes the host cell nucleus, leading to the formation of prereplicative sites and replication compartments. This process is driven by the protein which can form double-helical filaments in the absence of DNA. The polypeptide is Major DNA-binding protein (Human herpesvirus 1 (strain KOS) (HHV-1)).